We begin with the raw amino-acid sequence, 315 residues long: 4-hydroxy-3-methylbut-2-enyl diphosphate reductase (315 aa).

Cys-12 is a binding site for [4Fe-4S] cluster. 2 residues coordinate (2E)-4-hydroxy-3-methylbut-2-enyl diphosphate: His-43 and His-81. Dimethylallyl diphosphate is bound by residues His-43 and His-81. Positions 43 and 81 each coordinate isopentenyl diphosphate. Cys-103 serves as a coordination point for [4Fe-4S] cluster. Residue His-131 coordinates (2E)-4-hydroxy-3-methylbut-2-enyl diphosphate. Residue His-131 coordinates dimethylallyl diphosphate. His-131 contributes to the isopentenyl diphosphate binding site. The Proton donor role is filled by Glu-133. Residue Thr-172 participates in (2E)-4-hydroxy-3-methylbut-2-enyl diphosphate binding. Cys-200 serves as a coordination point for [4Fe-4S] cluster. (2E)-4-hydroxy-3-methylbut-2-enyl diphosphate contacts are provided by Ser-228, Asn-230, and Ser-273. Dimethylallyl diphosphate contacts are provided by Ser-228, Asn-230, and Ser-273. Isopentenyl diphosphate contacts are provided by Ser-228, Asn-230, and Ser-273.

This sequence belongs to the IspH family. [4Fe-4S] cluster serves as cofactor.

The catalysed reaction is isopentenyl diphosphate + 2 oxidized [2Fe-2S]-[ferredoxin] + H2O = (2E)-4-hydroxy-3-methylbut-2-enyl diphosphate + 2 reduced [2Fe-2S]-[ferredoxin] + 2 H(+). It carries out the reaction dimethylallyl diphosphate + 2 oxidized [2Fe-2S]-[ferredoxin] + H2O = (2E)-4-hydroxy-3-methylbut-2-enyl diphosphate + 2 reduced [2Fe-2S]-[ferredoxin] + 2 H(+). Its pathway is isoprenoid biosynthesis; dimethylallyl diphosphate biosynthesis; dimethylallyl diphosphate from (2E)-4-hydroxy-3-methylbutenyl diphosphate: step 1/1. It functions in the pathway isoprenoid biosynthesis; isopentenyl diphosphate biosynthesis via DXP pathway; isopentenyl diphosphate from 1-deoxy-D-xylulose 5-phosphate: step 6/6. In terms of biological role, catalyzes the conversion of 1-hydroxy-2-methyl-2-(E)-butenyl 4-diphosphate (HMBPP) into a mixture of isopentenyl diphosphate (IPP) and dimethylallyl diphosphate (DMAPP). Acts in the terminal step of the DOXP/MEP pathway for isoprenoid precursor biosynthesis. This is 4-hydroxy-3-methylbut-2-enyl diphosphate reductase from Exiguobacterium sibiricum (strain DSM 17290 / CCUG 55495 / CIP 109462 / JCM 13490 / 255-15).